Reading from the N-terminus, the 1496-residue chain is MALSKGLRLLGRLGAEGDCSVLLEARGRDDCLLFEAGTVATLAPEEKEVIKGQYGKLTDAYGCLGELRLKSGGTSLSFLVLVTGCTSVGRIPDAEIYKITATDFYPLQEEAKEEERLIALKKILSSGVFYFSWPNDGSRFDLTVRTQKQGDDSSEWGNSFFWNQLLHVPLRQHQVSCCDWLLKIICGVVTIRTVYASHKQAKACLVSRVSCERTGTRFHTRGVNDDGHVSNFVETEQMIYMDDGVSSFVQIRGSVPLFWEQPGLQVGSHHLRLHRGLEANAPAFDRHMVLLKEQYGQQVVVNLLGSRGGEEVLNRAFKKLLWASCHAGDTPMINFDFHQFAKGGKLEKLETLLRPQLKLHWEDFDVFTKGENVSPRFQKGTLRMNCLDCLDRTNTVQSFIALEVLHLQLKTLGLSSKPIVDRFVESFKAMWSLNGHSLSKVFTGSRALEGKAKVGKLKDGARSMSRTIQSNFFDGVKQEAIKLLLVGDVYGEEVADKGGMLLDSTALLVTPRILKAMTERQSEFTNFKRIRIAMGTWNVNGGKQFRSNVLRTAELTDWLLDSPQLSGATDSQDDSSPADIFAVGFEEMVELSAGNIVNASTTNKKMWGEQLQKAISRSHRYILLTSAQLVGVCLYIFVRPYHVPFIRDVAIDTVKTGMGGKAGNKGAVGIRFQFHSTSFCFICSHLTAGQSQVKERNEDYKEITQKLCFPMGRNVFSHDYVFWCGDFNYRIDLTYEEVFYFVKRQDWKKLLEFDQLQLQKSSGKIFKDFHEGAINFGPTYKYDVGSAAYDTSDKCRTPAWTDRVLWWRKKHPFDKTAGELNLLDSDLDVDTKVRHTWSPGALQYYGRAELQASDHRPVLAIVEVEVQEVDVGARERVFQEVSSFQGPLDATVVVNLQSPTLEEKNEFPEDLRTELMQTLGSYGTIVLVRINQGQMLVTFADSHSALSVLDVDGMKVKGRAVKIRPKTKDWLKGLREEIIRKRDSMAPVSPTANSCLLEENFDFTSLDYESEGDILEDDEDYLVDEFNQPGVSDSELGGDDLSDVPGPTALAPPSKSPALTKKKQHPTYKDDADLVELKRELEAVGEFRHRSPSRSLSVPNRPRPPQPPQRPPPPTGLMVKKSASDASISSGTHGQYSILQTARLLPGAPQQPPKARTGISKPYNVKQIKTTNAQEAEAAIRCLLEARGGASEEALSAVAPRDLEASSEPEPTPGAAKPETPQAPPLLPRRPPPRVPAIKKPTLRRTGKPLSPEEQFEQQTVHFTIGPPETSVEAPPVVTAPRVPPVPKPRTFQPGKAAERPSHRKPASDEAPPGAGASVPPPLEAPPLVPKVPPRRKKSAPAAFHLQVLQSNSQLLQGLTYNSSDSPSGHPPAAGTVFPQGDFLSTSSATSPDSDGTKAMKPEAAPLLGDYQDPFWNLLHHPKLLNNTWLSKSSDPLDSGTRSPKRDPIDPVSAGASAAKAELPPDHEHKTLGHWVTISDQEKRTALQVFDPLAKT.

The SAC domain occupies 120–444 (LKKILSSGVF…GHSLSKVFTG (325 aa)). One can recognise an RRM domain in the interval 889-968 (DATVVVNLQS…RAVKIRPKTK (80 aa)). Disordered stretches follow at residues 1027–1073 (NQPG…DDAD), 1085–1166 (GEFR…YNVK), 1190–1405 (ASEE…PEAA), and 1427–1473 (NTWL…KTLG). A compositionally biased stretch (pro residues) spans 1101–1115 (RPRPPQPPQRPPPPT). Phosphoserine occurs at positions 1124 and 1191. Over residues 1124-1140 (SDASISSGTHGQYSILQ) the composition is skewed to polar residues. Composition is skewed to pro residues over residues 1221–1235 (PQAP…PPRV) and 1319–1332 (VPPP…VPKV). The span at 1340–1359 (APAAFHLQVLQSNSQLLQGL) shows a compositional bias: low complexity. 2 stretches are compositionally biased toward polar residues: residues 1383 to 1394 (FLSTSSATSPDS) and 1427 to 1442 (NTWL…SGTR).

The protein belongs to the synaptojanin family. In the central section; belongs to the inositol 1,4,5-trisphosphate 5-phosphatase family. As to quaternary structure, binds to GRB2. Isoform 2A binds to SYNJ2BP/OMP25. Isoform 2B2 C-terminal proline-rich region binds to a variety of SH3 domain-containing proteins including SH3GL1, SH3GL2, SH3GL3 and GRB2.

It is found in the cytoplasm. The protein resides in the cell membrane. The protein localises to the membrane raft. Its subcellular location is the presynapse. It localises to the cytoskeleton. It catalyses the reaction a 1,2-diacyl-sn-glycero-3-phospho-(1D-myo-inositol-4,5-bisphosphate) + H2O = a 1,2-diacyl-sn-glycero-3-phospho-(1D-myo-inositol 4-phosphate) + phosphate. Functionally, inositol 5-phosphatase which may be involved in distinct membrane trafficking and signal transduction pathways. May mediate the inhibitory effect of Rac1 on endocytosis. In Homo sapiens (Human), this protein is Synaptojanin-2 (SYNJ2).